Reading from the N-terminus, the 170-residue chain is Transcription factor E (170 aa).

Residues 1-93 form the HTH TFE/IIEalpha-type domain; that stretch reads MKEAYLYIVE…TWYVDDDVIR (93 aa).

This sequence belongs to the TFE family. As to quaternary structure, monomer. Interaction with RNA polymerase subunits RpoF and RpoE is necessary for Tfe stimulatory transcription activity. Able to interact with Tbp and RNA polymerase in the absence of DNA promoter. Interacts both with the preinitiation and elongation complexes.

Transcription factor that plays a role in the activation of archaeal genes transcribed by RNA polymerase. Facilitates transcription initiation by enhancing TATA-box recognition by TATA-box-binding protein (Tbp), and transcription factor B (Tfb) and RNA polymerase recruitment. Not absolutely required for transcription in vitro, but particularly important in cases where Tbp or Tfb function is not optimal. It dynamically alters the nucleic acid-binding properties of RNA polymerases by stabilizing the initiation complex and destabilizing elongation complexes. Seems to translocate with the RNA polymerase following initiation and acts by binding to the non template strand of the transcription bubble in elongation complexes. The sequence is that of Transcription factor E from Pyrobaculum neutrophilum (strain DSM 2338 / JCM 9278 / NBRC 100436 / V24Sta) (Thermoproteus neutrophilus).